A 796-amino-acid chain; its full sequence is Protein translocase subunit SecA 2 (796 aa).

ATP contacts are provided by residues Q84, 102-106 (GEGKT), and D496.

This sequence belongs to the SecA family. Monomer and homodimer. Part of the essential Sec protein translocation apparatus which comprises SecA, SecYEG and auxiliary proteins SecDF. Other proteins may also be involved.

The protein localises to the cell membrane. Its subcellular location is the cytoplasm. It carries out the reaction ATP + H2O + cellular proteinSide 1 = ADP + phosphate + cellular proteinSide 2.. Part of the Sec protein translocase complex. Interacts with the SecYEG preprotein conducting channel. Has a central role in coupling the hydrolysis of ATP to the transfer of proteins into and across the cell membrane, serving as an ATP-driven molecular motor driving the stepwise translocation of polypeptide chains across the membrane. The protein is Protein translocase subunit SecA 2 of Staphylococcus epidermidis (strain ATCC 12228 / FDA PCI 1200).